We begin with the raw amino-acid sequence, 415 residues long: WD repeat-containing protein JIP5 (415 aa).

WD repeat units lie at residues 5-44 (DVGS…KEQA), 104-142 (AHDS…CVRE), 145-184 (QHFD…PEPF), 189-228 (DQDD…GDCV), and 233-282 (GHPL…VVAD). The tract at residues 328–415 (GALGVTNENE…DVENAFFDEL (88 aa)) is disordered. Acidic residues predominate over residues 337–346 (EQSDEDEEMD). The segment covering 358 to 367 (DGSGSSSSGE) has biased composition (low complexity). Residues 390-405 (EQKPLDVDKPKGRNEI) show a composition bias toward basic and acidic residues.

Belongs to the WD repeat WDR55 family.

The protein resides in the nucleus. The protein localises to the nucleolus. The protein is WD repeat-containing protein JIP5 (JIP5) of Laccaria bicolor (strain S238N-H82 / ATCC MYA-4686) (Bicoloured deceiver).